A 303-amino-acid chain; its full sequence is Glycine--tRNA ligase alpha subunit (303 aa).

Belongs to the class-II aminoacyl-tRNA synthetase family. As to quaternary structure, tetramer of two alpha and two beta subunits.

It is found in the cytoplasm. It catalyses the reaction tRNA(Gly) + glycine + ATP = glycyl-tRNA(Gly) + AMP + diphosphate. This chain is Glycine--tRNA ligase alpha subunit, found in Salmonella paratyphi A (strain ATCC 9150 / SARB42).